The following is a 276-amino-acid chain: Cis-2,3-dihydrobiphenyl-2,3-diol dehydrogenase (276 aa).

Residue 9–33 coordinates NAD(+); sequence LVTGGGSGLGRAIVDRFVAEGARVA. Serine 142 is a substrate binding site. Tyrosine 155 functions as the Proton acceptor in the catalytic mechanism.

This sequence belongs to the short-chain dehydrogenases/reductases (SDR) family.

The catalysed reaction is (2R,3S)-3-phenylcyclohexa-3,5-diene-1,2-diol + NAD(+) = biphenyl-2,3-diol + NADH + H(+). It functions in the pathway xenobiotic degradation; biphenyl degradation; 2-hydroxy-2,4-pentadienoate and benzoate from biphenyl: step 2/4. This is Cis-2,3-dihydrobiphenyl-2,3-diol dehydrogenase (bphB) from Pseudomonas sp. (strain KKS102).